The following is a 438-amino-acid chain: Glutamyl-tRNA reductase (438 aa).

Substrate is bound by residues 49 to 52 (TCNR), Ser-109, 114 to 116 (EQQ), and Gln-120. Cys-50 functions as the Nucleophile in the catalytic mechanism. 191–196 (GAGAMA) provides a ligand contact to NADP(+).

It belongs to the glutamyl-tRNA reductase family. In terms of assembly, homodimer.

The catalysed reaction is (S)-4-amino-5-oxopentanoate + tRNA(Glu) + NADP(+) = L-glutamyl-tRNA(Glu) + NADPH + H(+). It functions in the pathway porphyrin-containing compound metabolism; protoporphyrin-IX biosynthesis; 5-aminolevulinate from L-glutamyl-tRNA(Glu): step 1/2. Its function is as follows. Catalyzes the NADPH-dependent reduction of glutamyl-tRNA(Glu) to glutamate 1-semialdehyde (GSA). This Corynebacterium diphtheriae (strain ATCC 700971 / NCTC 13129 / Biotype gravis) protein is Glutamyl-tRNA reductase.